The primary structure comprises 381 residues: Chaperone protein DnaJ (381 aa).

The 66-residue stretch at 5–70 (DYYEVLGIER…EKRSAYDQFG (66 aa)) folds into the J domain. A CR-type zinc finger spans residues 137–215 (GTTVDIRVPR…CHGEGRVRET (79 aa)). Zn(2+)-binding residues include Cys-150, Cys-153, Cys-167, Cys-170, Cys-189, Cys-192, Cys-203, and Cys-206. CXXCXGXG motif repeat units lie at residues 150-157 (CEHCDGDG), 167-174 (CPTCHGQG), 189-196 (CPTCHGAG), and 203-210 (CRKCHGEG).

Belongs to the DnaJ family. In terms of assembly, homodimer. The cofactor is Zn(2+).

The protein localises to the cytoplasm. Participates actively in the response to hyperosmotic and heat shock by preventing the aggregation of stress-denatured proteins and by disaggregating proteins, also in an autonomous, DnaK-independent fashion. Unfolded proteins bind initially to DnaJ; upon interaction with the DnaJ-bound protein, DnaK hydrolyzes its bound ATP, resulting in the formation of a stable complex. GrpE releases ADP from DnaK; ATP binding to DnaK triggers the release of the substrate protein, thus completing the reaction cycle. Several rounds of ATP-dependent interactions between DnaJ, DnaK and GrpE are required for fully efficient folding. Also involved, together with DnaK and GrpE, in the DNA replication of plasmids through activation of initiation proteins. This chain is Chaperone protein DnaJ, found in Chromohalobacter salexigens (strain ATCC BAA-138 / DSM 3043 / CIP 106854 / NCIMB 13768 / 1H11).